The sequence spans 102 residues: Small ribosomal subunit protein uS10 (102 aa).

The tract at residues 37-61 (PIPLPTKSLKITTRKSTDGEGSSSF) is disordered.

It belongs to the universal ribosomal protein uS10 family. Part of the 30S ribosomal subunit.

In terms of biological role, involved in the binding of tRNA to the ribosomes. In Methanococcus vannielii (strain ATCC 35089 / DSM 1224 / JCM 13029 / OCM 148 / SB), this protein is Small ribosomal subunit protein uS10.